The primary structure comprises 297 residues: 4-hydroxy-tetrahydrodipicolinate synthase (297 aa).

Pyruvate is bound at residue Thr-49. Tyr-137 serves as the catalytic Proton donor/acceptor. Lys-166 functions as the Schiff-base intermediate with substrate in the catalytic mechanism. Ile-208 is a pyruvate binding site.

The protein belongs to the DapA family. As to quaternary structure, homotetramer; dimer of dimers.

The protein resides in the cytoplasm. The catalysed reaction is L-aspartate 4-semialdehyde + pyruvate = (2S,4S)-4-hydroxy-2,3,4,5-tetrahydrodipicolinate + H2O + H(+). The protein operates within amino-acid biosynthesis; L-lysine biosynthesis via DAP pathway; (S)-tetrahydrodipicolinate from L-aspartate: step 3/4. In terms of biological role, catalyzes the condensation of (S)-aspartate-beta-semialdehyde [(S)-ASA] and pyruvate to 4-hydroxy-tetrahydrodipicolinate (HTPA). The chain is 4-hydroxy-tetrahydrodipicolinate synthase from Prosthecochloris aestuarii (strain DSM 271 / SK 413).